A 202-amino-acid polypeptide reads, in one-letter code: Putative 3-methyladenine DNA glycosylase (202 aa).

The protein belongs to the DNA glycosylase MPG family.

The chain is Putative 3-methyladenine DNA glycosylase from Clostridium botulinum (strain Alaska E43 / Type E3).